The primary structure comprises 384 residues: MQRHLLLGLAGLPALLSAQRVSVTCSFATVAANGETCDSMAATWGLDTATFQSLNPKAKCPEVIGGEQYCVVGTVTTVTGEPTTAPATTSTQTTTTTTTEVTSTTVPGNGITTPVPVQPNLVSNCNKFYFVNKGDNCADITARYNLDLSDFLEWNPKAGNSCSGLWANAYACVSVIGYVPKPKPKPTSTSTKPPTATGNGIPTPLPTQPGMTDGCNKFYLVKPGETCADIASRNGVSLSDFLQWNPHAGNACSGLWANAYACLGMVAFSLKSRFRVDCTGDAHNVVNIAGDQGQCINTDCSVGSLEIAAAGVCPDGEVQISYWEQPGCQGKWFGYGYAKRGECRGLWTNGWKFKAMHLRCAKSQDDCVNKGSCAYDPEPAQGVC.

Residues 1 to 18 form the signal peptide; that stretch reads MQRHLLLGLAGLPALLSA. In terms of domain architecture, LysM 1 spans 27–71; that stretch reads FATVAANGETCDSMAATWGLDTATFQSLNPKAKCPEVIGGEQYCV. The segment covering 81-106 has biased composition (low complexity); the sequence is EPTTAPATTSTQTTTTTTTEVTSTTV. A disordered region spans residues 81–112; sequence EPTTAPATTSTQTTTTTTTEVTSTTVPGNGIT. A LysM 2 domain is found at 127 to 173; sequence KFYFVNKGDNCADITARYNLDLSDFLEWNPKAGNSCSGLWANAYACV. Residues 183–206 are disordered; the sequence is KPKPTSTSTKPPTATGNGIPTPLP. The segment covering 186 to 195 has biased composition (low complexity); the sequence is PTSTSTKPPT. The region spanning 217–263 is the LysM 3 domain; sequence KFYLVKPGETCADIASRNGVSLSDFLQWNPHAGNACSGLWANAYACL.

It belongs to the secreted LysM effector family.

Functionally, might have a role in sequestration of chitin oligosaccharides (breakdown products of fungal cell walls that are released during invasion and act as triggers of host immunity) to dampen host defense. In Beauveria bassiana (strain ARSEF 2860) (White muscardine disease fungus), this protein is Secreted LysM effector Blys7.